Here is a 110-residue protein sequence, read N- to C-terminus: Co-chaperonin GroES (110 aa).

The protein belongs to the GroES chaperonin family. As to quaternary structure, heptamer of 7 subunits arranged in a ring. Interacts with the chaperonin GroEL.

The protein resides in the cytoplasm. Functionally, together with the chaperonin GroEL, plays an essential role in assisting protein folding. The GroEL-GroES system forms a nano-cage that allows encapsulation of the non-native substrate proteins and provides a physical environment optimized to promote and accelerate protein folding. GroES binds to the apical surface of the GroEL ring, thereby capping the opening of the GroEL channel. This Mycoplasma genitalium (strain ATCC 33530 / DSM 19775 / NCTC 10195 / G37) (Mycoplasmoides genitalium) protein is Co-chaperonin GroES.